The chain runs to 641 residues: Tetracycline resistance protein TetS (641 aa).

A tr-type G domain is found at 1-242; sequence MKIINIGILA…VITSKLFSPT (242 aa). Residues 10–17, 74–78, and 128–131 each bind GTP; these read AHVDAGKT, DTPGH, and NKID.

Belongs to the TRAFAC class translation factor GTPase superfamily. Classic translation factor GTPase family. TetM/TetO subfamily.

Abolishes the inhibitory effect of tetracyclin on protein synthesis by a non-covalent modification of the ribosomes. This is Tetracycline resistance protein TetS (tetS) from Listeria monocytogenes.